Reading from the N-terminus, the 76-residue chain is Glutathione S-transferase (76 aa).

Residues Xaa-1 to Leu-40 enclose the GST N-terminal domain. Positions Leu-41 to Val-76 constitute a GST C-terminal domain.

The protein belongs to the GST superfamily. Theta family.

Its subcellular location is the cytoplasm. The catalysed reaction is RX + glutathione = an S-substituted glutathione + a halide anion + H(+). Functionally, conjugation of reduced glutathione to a wide number of exogenous and endogenous hydrophobic electrophiles. The chain is Glutathione S-transferase from Brassica oleracea var. italica (Broccoli).